We begin with the raw amino-acid sequence, 117 residues long: Large ribosomal subunit protein bL19 (117 aa).

It belongs to the bacterial ribosomal protein bL19 family.

In terms of biological role, this protein is located at the 30S-50S ribosomal subunit interface and may play a role in the structure and function of the aminoacyl-tRNA binding site. This Shewanella woodyi (strain ATCC 51908 / MS32) protein is Large ribosomal subunit protein bL19.